Here is a 262-residue protein sequence, read N- to C-terminus: Catechol O-methyltransferase domain-containing protein 1 (262 aa).

A helical; Signal-anchor for type II membrane protein membrane pass occupies residues 12–32 (AALALGSAALGAAFATGLFLG). S-adenosyl-L-methionine is bound by residues Asp-108, 110-111 (GT), Ser-116, Glu-134, Val-135, Ala-163, Asp-185, Asp-187, and Tyr-194.

This sequence belongs to the class I-like SAM-binding methyltransferase superfamily. Cation-dependent O-methyltransferase family. As to quaternary structure, homodimer.

Its subcellular location is the membrane. In terms of biological role, putative O-methyltransferase. In Homo sapiens (Human), this protein is Catechol O-methyltransferase domain-containing protein 1 (COMTD1).